We begin with the raw amino-acid sequence, 92 residues long: Phosphoribosyl-ATP pyrophosphatase (92 aa).

Belongs to the PRA-PH family.

Its subcellular location is the cytoplasm. It carries out the reaction 1-(5-phospho-beta-D-ribosyl)-ATP + H2O = 1-(5-phospho-beta-D-ribosyl)-5'-AMP + diphosphate + H(+). Its pathway is amino-acid biosynthesis; L-histidine biosynthesis; L-histidine from 5-phospho-alpha-D-ribose 1-diphosphate: step 2/9. The protein is Phosphoribosyl-ATP pyrophosphatase of Leptospira biflexa serovar Patoc (strain Patoc 1 / ATCC 23582 / Paris).